A 697-amino-acid polypeptide reads, in one-letter code: MVNFGKRLMADQLEEWKEYYINYKMMKKKVKQYVQQTQNGGRNREQVLKEFSRMLDDQIEKIVLFLLQQQGHLASRIEKLGEERALLMEQADASQISELREAYREVGIDLMKLLRFVDMNATGIRKILKKFDKRFGYKFTDYYVSTRANHPCSQLQQIFKQVGIVAVVGALSRNLAFLQDHQGNFPSIYDHPSITLKDPIIEQINHSVQKLTHATNLLQFIGQHALIIPEDMHSGSEDLVDDQSYHFMSLLLNLANTFLYMVNTYIIVPTADDYSVSLGAAATVCGVIIGSMAVAQVFSSVYFSAWSNKSYFRPLVFSSIMLFLGNLLYALAYDVNSLTVLIVGRLLCGLGSARAVNRRYISDCVPLKTRLQASAGFVSASALGMACGPALAGLLQTNFKIYGFTFDQNTLPGWIMCLAWITYLFWLWISFKEPDHIVRENSVNTPSSDSGHRRNSNLEDGLAQPFLIDAKESLDENGEDNDENEEDPEDSHKPATSLAAAYRLLTPSVKVQLLIYFMLKFAMEILLSESSVVTTFYFNWSTSTVAMFLAVLGLTVLPVNVIVGSYVTNLFQDRQILVASEIMVLIGIAMSFRFTSHYSVPQYVSSALITFVFAEVLEGVNLSLLSRVMSSRLSRGTYNGGLLSTEAGTLARVAADMTITAAGYLGQNSLLNVTLLPSFVICVASIVATFCTYNSLY.

Residues 2–145 enclose the SPX domain; sequence VNFGKRLMAD…GYKFTDYYVS (144 aa). Transmembrane regions (helical) follow at residues 247 to 267, 278 to 298, 315 to 335, 338 to 356, 375 to 395, 411 to 431, 513 to 533, 544 to 564, 576 to 596, 604 to 624, and 670 to 690; these read FMSL…TYII, LGAA…AQVF, LVFS…AYDV, LTVL…ARAV, AGFV…AGLL, LPGW…WISF, LLIY…SSVV, TVAM…VIVG, ILVA…RFTS, VSSA…NLSL, and LLNV…VATF.

Belongs to the major facilitator superfamily.

It is found in the membrane. This is SPX domain-containing membrane protein OsI_08463 from Oryza sativa subsp. indica (Rice).